The following is a 384-amino-acid chain: PqqA peptide cyclase (384 aa).

The 213-residue stretch at 14–226 folds into the Radical SAM core domain; sequence IPAPVGLLAE…IRIVEAARER (213 aa). Cys28, Cys32, and Cys35 together coordinate [4Fe-4S] cluster.

The protein belongs to the radical SAM superfamily. PqqE family. As to quaternary structure, interacts with PqqD. The interaction is necessary for activity of PqqE. The cofactor is [4Fe-4S] cluster.

It carries out the reaction [PQQ precursor protein] + S-adenosyl-L-methionine = E-Y cross-linked-[PQQ precursor protein] + 5'-deoxyadenosine + L-methionine + H(+). It participates in cofactor biosynthesis; pyrroloquinoline quinone biosynthesis. In terms of biological role, catalyzes the cross-linking of a glutamate residue and a tyrosine residue in the PqqA protein as part of the biosynthesis of pyrroloquinoline quinone (PQQ). This Methylorubrum populi (strain ATCC BAA-705 / NCIMB 13946 / BJ001) (Methylobacterium populi) protein is PqqA peptide cyclase.